The primary structure comprises 258 residues: Snake venom serine protease catroxase-2 (258 aa).

Residues 1–18 (MVLIRVLANLLILQLSYA) form the signal peptide. Positions 19 to 24 (QKSSEL) are excised as a propeptide. The region spanning 25–249 (VVGGDECNIN…YNDWIQSIIA (225 aa)) is the Peptidase S1 domain. 6 disulfide bridges follow: C31–C163, C50–C66, C98–C256, C142–C210, C174–C189, and C200–C225. An N-linked (GlcNAc...) asparagine glycan is attached at N44. Active-site charge relay system residues include H65 and D110. Residue S204 is the Charge relay system of the active site.

The protein belongs to the peptidase S1 family. Snake venom subfamily. In terms of assembly, monomer. As to expression, expressed by the venom gland.

The protein resides in the secreted. Functionally, snake venom serine protease that may act in the hemostasis system of the prey. This is Snake venom serine protease catroxase-2 from Crotalus atrox (Western diamondback rattlesnake).